The primary structure comprises 360 residues: Lipid-A-disaccharide synthase (360 aa).

Belongs to the LpxB family.

The catalysed reaction is a lipid X + a UDP-2-N,3-O-bis[(3R)-3-hydroxyacyl]-alpha-D-glucosamine = a lipid A disaccharide + UDP + H(+). It functions in the pathway bacterial outer membrane biogenesis; LPS lipid A biosynthesis. Its function is as follows. Condensation of UDP-2,3-diacylglucosamine and 2,3-diacylglucosamine-1-phosphate to form lipid A disaccharide, a precursor of lipid A, a phosphorylated glycolipid that anchors the lipopolysaccharide to the outer membrane of the cell. The polypeptide is Lipid-A-disaccharide synthase (Helicobacter pylori (strain HPAG1)).